The primary structure comprises 383 residues: Acetylornithine deacetylase (383 aa).

His80 contributes to the Zn(2+) binding site. Asp82 is a catalytic residue. Asp112 is a Zn(2+) binding site. The active site involves Glu144. The Zn(2+) site is built by Glu145, Glu169, and His355.

Belongs to the peptidase M20A family. ArgE subfamily. In terms of assembly, homodimer. Zn(2+) is required as a cofactor. Co(2+) serves as cofactor. Requires glutathione as cofactor.

The protein resides in the cytoplasm. It carries out the reaction N(2)-acetyl-L-ornithine + H2O = L-ornithine + acetate. It functions in the pathway amino-acid biosynthesis; L-arginine biosynthesis; L-ornithine from N(2)-acetyl-L-ornithine (linear): step 1/1. Functionally, catalyzes the hydrolysis of the amide bond of N(2)-acetylated L-amino acids. Cleaves the acetyl group from N-acetyl-L-ornithine to form L-ornithine, an intermediate in L-arginine biosynthesis pathway, and a branchpoint in the synthesis of polyamines. The chain is Acetylornithine deacetylase from Erwinia tasmaniensis (strain DSM 17950 / CFBP 7177 / CIP 109463 / NCPPB 4357 / Et1/99).